Consider the following 550-residue polypeptide: Zinc finger protein 382 (550 aa).

The interval Met-1–Asn-105 is mediates interaction with TRIM28. Represses transcription stretches follow at residues Gly-5–Val-46 and Ile-70–Pro-211. A KRAB domain is found at Val-7 to Glu-78. The C2H2-type 1; degenerate zinc-finger motif lies at Phe-212–His-234. 9 C2H2-type zinc fingers span residues Phe-296–His-318, Tyr-324–His-346, Phe-352–His-374, Tyr-380–His-402, Tyr-408–His-430, Tyr-436–His-458, Tyr-464–His-486, Asn-492–His-514, and Tyr-520–His-542. The required for transcriptional repression activity; probably mediates sequence-specific DNA-binding stretch occupies residues Phe-296–Gln-550.

It belongs to the krueppel C2H2-type zinc-finger protein family. As to quaternary structure, interacts with TRIM28; enhances the transcriptional repressor activity. Specifically expressed in heart with a weaker expression also detected in skeletal muscle.

The protein localises to the nucleus. Functionally, functions as a sequence-specific transcriptional repressor. This is Zinc finger protein 382 (ZNF382) from Homo sapiens (Human).